A 395-amino-acid polypeptide reads, in one-letter code: Galactokinase (395 aa).

39–42 contributes to the substrate binding site; the sequence is EHTD. ATP is bound by residues Ser73 and 127 to 133; that span reads GAGLSSS. Residues Ser133 and Glu165 each contribute to the Mg(2+) site. The Proton acceptor role is filled by Asp177. Tyr227 is a substrate binding site.

It belongs to the GHMP kinase family. GalK subfamily.

Its subcellular location is the cytoplasm. It catalyses the reaction alpha-D-galactose + ATP = alpha-D-galactose 1-phosphate + ADP + H(+). The protein operates within carbohydrate metabolism; galactose metabolism. In terms of biological role, catalyzes the transfer of the gamma-phosphate of ATP to D-galactose to form alpha-D-galactose-1-phosphate (Gal-1-P). This Halalkalibacterium halodurans (strain ATCC BAA-125 / DSM 18197 / FERM 7344 / JCM 9153 / C-125) (Bacillus halodurans) protein is Galactokinase.